The primary structure comprises 688 residues: GTPase IMAP family member 8 (688 aa).

Residues 1–14 show a composition bias toward low complexity; sequence MATSSHQGAAAGSQ. Residues 1-42 form a disordered region; sequence MATSSHQGAAAGSQAEHRSCEASVGQGERPSASQGQEGNFKQ. A compositionally biased stretch (polar residues) spans 31 to 42; sequence SASQGQEGNFKQ. AIG1-type G domains are found at residues 46–247, 282–472, and 473–677; these read TSTL…MESS, MPEL…VIRE, and KELL…GQLK. The interval 55 to 62 is G1; sequence GKQGAGKS. GTP contacts are provided by residues 55-63 and Ser-76; that span reads GKQGAGKSA. Positions 82–86 are G2; that stretch reads MVTDR. The segment at 103 to 106 is G3; sequence DTPD. Residues 172–175 are G4; sequence TRED. Residues 173-175 and Asn-209 contribute to the GTP site; that span reads RED. Positions 208–210 are G5; the sequence is NNK.

Belongs to the TRAFAC class TrmE-Era-EngA-EngB-Septin-like GTPase superfamily. AIG1/Toc34/Toc159-like paraseptin GTPase family. IAN subfamily. In terms of tissue distribution, abundantly expressed in the thymus (in thymocytes), spleen (in splenocytes), lymph node, followed by bone marrow and lung.

It localises to the endoplasmic reticulum. It is found in the golgi apparatus. The protein localises to the mitochondrion. Its subcellular location is the cytoplasm. The protein resides in the cytosol. Exerts an anti-apoptotic effect in the immune system and is involved in responses to infections. This is GTPase IMAP family member 8 (Gimap8) from Mus musculus (Mouse).